The following is a 407-amino-acid chain: Biotin synthase (407 aa).

One can recognise a Radical SAM core domain in the interval 47-277 (WFGRRVKLNY…DVEVRIAGGR (231 aa)). [4Fe-4S] cluster-binding residues include C65, C69, and C72. The [2Fe-2S] cluster site is built by C109, C142, C202, and R272. The tract at residues 368 to 407 (GGGVCAPAPAATTPRPAEEPRTDLVAVRRRGAGTDLAPNA) is disordered. Over residues 373-382 (APAPAATTPR) the composition is skewed to low complexity.

Belongs to the radical SAM superfamily. Biotin synthase family. Homodimer. [4Fe-4S] cluster serves as cofactor. The cofactor is [2Fe-2S] cluster.

It carries out the reaction (4R,5S)-dethiobiotin + (sulfur carrier)-SH + 2 reduced [2Fe-2S]-[ferredoxin] + 2 S-adenosyl-L-methionine = (sulfur carrier)-H + biotin + 2 5'-deoxyadenosine + 2 L-methionine + 2 oxidized [2Fe-2S]-[ferredoxin]. It participates in cofactor biosynthesis; biotin biosynthesis; biotin from 7,8-diaminononanoate: step 2/2. Functionally, catalyzes the conversion of dethiobiotin (DTB) to biotin by the insertion of a sulfur atom into dethiobiotin via a radical-based mechanism. In Streptomyces coelicolor (strain ATCC BAA-471 / A3(2) / M145), this protein is Biotin synthase.